Consider the following 197-residue polypeptide: GTP cyclohydrolase-2 (197 aa).

GTP is bound at residue 50 to 54 (RIHSE). The Zn(2+) site is built by Cys-55, Cys-66, and Cys-68. GTP-binding positions include Gln-71, 93–95 (EGR), and Thr-115. Asp-127 (proton acceptor) is an active-site residue. Catalysis depends on Arg-129, which acts as the Nucleophile. 2 residues coordinate GTP: Thr-150 and Lys-155.

The protein belongs to the GTP cyclohydrolase II family. Requires Zn(2+) as cofactor.

It carries out the reaction GTP + 4 H2O = 2,5-diamino-6-hydroxy-4-(5-phosphoribosylamino)-pyrimidine + formate + 2 phosphate + 3 H(+). It functions in the pathway cofactor biosynthesis; riboflavin biosynthesis; 5-amino-6-(D-ribitylamino)uracil from GTP: step 1/4. Its function is as follows. Catalyzes the conversion of GTP to 2,5-diamino-6-ribosylamino-4(3H)-pyrimidinone 5'-phosphate (DARP), formate and pyrophosphate. The sequence is that of GTP cyclohydrolase-2 from Neisseria gonorrhoeae (strain ATCC 700825 / FA 1090).